The sequence spans 290 residues: ATP synthase gamma chain (290 aa).

Belongs to the ATPase gamma chain family. In terms of assembly, F-type ATPases have 2 components, CF(1) - the catalytic core - and CF(0) - the membrane proton channel. CF(1) has five subunits: alpha(3), beta(3), gamma(1), delta(1), epsilon(1). CF(0) has three main subunits: a, b and c.

Its subcellular location is the cell inner membrane. Produces ATP from ADP in the presence of a proton gradient across the membrane. The gamma chain is believed to be important in regulating ATPase activity and the flow of protons through the CF(0) complex. The chain is ATP synthase gamma chain from Chelativorans sp. (strain BNC1).